A 312-amino-acid polypeptide reads, in one-letter code: Small ribosomal subunit protein RACK1 (312 aa).

7 WD repeats span residues 9 to 42 (GHRGWVTSLACPQQAGSYIKVVSTSRDGTVISWK), 63 to 93 (GHTGFVSCVSLAHATDYALTASWDRSIRMWD), 105 to 135 (KHTKDVLAVAFSPDDRLIVSAGRDNVIRVWN), 148 to 180 (GHEDWVSSICFSPSLEHPIVVSGSWDNTIKVWN), 192 to 222 (GHSNYVSTVTVSPDGSLCASGGKDGAALLWD), 233 to 262 (NVESPINQIGFSPNRFWMCVATERSLSVYD), and 279 to 307 (PSECISIAWSADGNTLYSGHKDNLIRVWS).

Belongs to the WD repeat G protein beta family. Ribosomal protein RACK1 subfamily.

In Leishmania major, this protein is Small ribosomal subunit protein RACK1.